Here is a 569-residue protein sequence, read N- to C-terminus: Myotubularin-related protein 9 (569 aa).

In terms of domain architecture, Myotubularin phosphatase spans 134 to 513 (GWSAFDLEQE…QCIKIWDRLF (380 aa)).

Belongs to the protein-tyrosine phosphatase family. Non-receptor class myotubularin subfamily. Heterodimer with lipid phosphatase mtm-6.

It is found in the cytoplasm. It localises to the membrane. Functionally, may act as a regulatory subunit for mtm-6. In association with phosphatase mtm-6, plays a role in endosome trafficking probably by regulating phosphatidylinositol-3-phosphate levels. Regulates fluid phase endocytosis in coelomocytes. Regulates posterior migration of QL neuroblast descendants and the anterior migration of QR neuroblast descendants and HSN neurons during larval development probably by controlling Wnt ligand secretion through the regulation of sorting receptor mig-14 trafficking. Involved in the formation of correct synapse number in DA9 motor neurons. The polypeptide is Myotubularin-related protein 9 (Caenorhabditis elegans).